The chain runs to 1857 residues: U3 small nucleolar RNA-associated protein 10 (1857 aa).

Residues 267-287 (LTAYSIISVLSSLVPLSADLV) traverse the membrane as a helical segment. One copy of the HEAT repeat lies at 1817-1855 (LIPYIAELLEDDDEEVELEVRNGLVRVIENVLGEPLDRY).

It belongs to the HEATR1/UTP10 family. As to quaternary structure, component of the ribosomal small subunit (SSU) processome.

The protein resides in the nucleus. It is found in the nucleolus. It localises to the membrane. Involved in nucleolar processing of pre-18S ribosomal RNA. Involved in ribosome biosynthesis. This chain is U3 small nucleolar RNA-associated protein 10, found in Debaryomyces hansenii (strain ATCC 36239 / CBS 767 / BCRC 21394 / JCM 1990 / NBRC 0083 / IGC 2968) (Yeast).